The chain runs to 520 residues: Nonsense-mediated mRNA decay factor SMG9 (520 aa).

The disordered stretch occupies residues 1-143 (MSESGHSQPG…KGEKEGQRPT (143 aa)). The residue at position 2 (S2) is an N-acetylserine. Phosphoserine is present on residues S2, S4, S7, S32, and S53. The segment covering 36–53 (GRERDYIAPWERERRDGS) has biased composition (basic and acidic residues). Residues 78-94 (QPPPPAAPAAPPAPAPL) show a composition bias toward pro residues. Residues 109 to 121 (GPAATTSTSTPEG) show a composition bias toward low complexity. A compositionally biased stretch (pro residues) spans 122–133 (TAPPPPAAPVPP). S451 carries the post-translational modification Phosphoserine.

The protein belongs to the SMG9 family. As to quaternary structure, self-associates to form homodimers and forms heterodimers with SMG8; these assembly forms may represent SMG1C intermediate forms. Component of the SMG1C complex composed of SMG1, SMG8 and SMG9. Self-associates to form homodimers and forms heterodimers with SMG8; these assembly forms may represent SMG1C intermediate forms. Interacts with DHX34; the interaction is RNA-independent. Phosphorylated by SMG1.

Functionally, involved in nonsense-mediated decay (NMD) of mRNAs containing premature stop codons. Is recruited by release factors to stalled ribosomes together with SMG1 and SMG8 (forming the SMG1C protein kinase complex) and, in the SMG1C complex, is required for the efficient association between SMG1 and SMG8. Plays a role in brain, heart, and eye development. The protein is Nonsense-mediated mRNA decay factor SMG9 of Bos taurus (Bovine).